We begin with the raw amino-acid sequence, 340 residues long: Dihydroorotate dehydrogenase (quinone) (340 aa).

FMN contacts are provided by residues Ala-62–Lys-66 and Thr-86. Lys-66 is a binding site for substrate. Residue Asn-111–Phe-115 coordinates substrate. Residues Asn-139 and Asn-172 each coordinate FMN. Asn-172 is a binding site for substrate. Ser-175 functions as the Nucleophile in the catalytic mechanism. Asn-177 is a substrate binding site. The FMN site is built by Lys-217 and Thr-245. Asn-246 to Thr-247 provides a ligand contact to substrate. FMN contacts are provided by residues Gly-268, Gly-297, and Tyr-318–Ser-319.

The protein belongs to the dihydroorotate dehydrogenase family. Type 2 subfamily. Monomer. FMN serves as cofactor.

The protein localises to the cell membrane. The enzyme catalyses (S)-dihydroorotate + a quinone = orotate + a quinol. It functions in the pathway pyrimidine metabolism; UMP biosynthesis via de novo pathway; orotate from (S)-dihydroorotate (quinone route): step 1/1. In terms of biological role, catalyzes the conversion of dihydroorotate to orotate with quinone as electron acceptor. The chain is Dihydroorotate dehydrogenase (quinone) from Shewanella woodyi (strain ATCC 51908 / MS32).